A 402-amino-acid polypeptide reads, in one-letter code: Tryptophan synthase beta chain (402 aa).

Residue Lys-91 is modified to N6-(pyridoxal phosphate)lysine.

It belongs to the TrpB family. Tetramer of two alpha and two beta chains. Requires pyridoxal 5'-phosphate as cofactor.

The enzyme catalyses (1S,2R)-1-C-(indol-3-yl)glycerol 3-phosphate + L-serine = D-glyceraldehyde 3-phosphate + L-tryptophan + H2O. Its pathway is amino-acid biosynthesis; L-tryptophan biosynthesis; L-tryptophan from chorismate: step 5/5. The beta subunit is responsible for the synthesis of L-tryptophan from indole and L-serine. The sequence is that of Tryptophan synthase beta chain from Streptococcus thermophilus (strain ATCC BAA-491 / LMD-9).